The primary structure comprises 161 residues: Large ribosomal subunit protein bL17 (161 aa).

Residues 126 to 161 (KVAKKATRTRRSKKTTEAAPAAEVPATEEPKAESAE) form a disordered region. Over residues 129–138 (KKATRTRRSK) the composition is skewed to basic residues. Low complexity predominate over residues 142-152 (EAAPAAEVPAT).

It belongs to the bacterial ribosomal protein bL17 family. Part of the 50S ribosomal subunit. Contacts protein L32.

The polypeptide is Large ribosomal subunit protein bL17 (Bacteroides fragilis (strain ATCC 25285 / DSM 2151 / CCUG 4856 / JCM 11019 / LMG 10263 / NCTC 9343 / Onslow / VPI 2553 / EN-2)).